The primary structure comprises 348 residues: Organic solute transporter alpha-like protein 3 (348 aa).

Topologically, residues 1 to 49 (MAKEHGAMRSVLNLIGSVMLPQDTSNCSDRHDTPSAPEFLSHLQPFQTV) are extracellular. Asn-26 carries an N-linked (GlcNAc...) asparagine glycan. Residues 50–70 (LLSIASFSTTIVLCLSLIHWF) traverse the membrane as a helical segment. At 71 to 84 (YVYKYVSIEKRRNK) the chain is on the cytoplasmic side. Residues 85–105 (LYWLIAVFPVACSCSFIAMCV) traverse the membrane as a helical segment. Topologically, residues 106 to 109 (PRTA) are extracellular. A helical transmembrane segment spans residues 110–130 (VILTCIGVLYYLMCLFVIVSL). Residues 131 to 180 (ARHLFGGRESFSTCLQYDDRPIDFRSPPFCCIIPKLPTARSTEKNIRRLE) lie on the Cytoplasmic side of the membrane. A helical transmembrane segment spans residues 181–201 (WCVLQAPIVRSIIIFLDVVAV). The Extracellular portion of the chain corresponds to 202–213 (AEMREDATPYIR). Residues 214–234 (YSDMASLCSLLLAIFGVHTLA) traverse the membrane as a helical segment. At 235 to 240 (RVTSNK) the chain is on the cytoplasmic side. A helical transmembrane segment spans residues 241–261 (LSAYCFMSMFRLVDISLLFFS). Residues 262–291 (AQQPMIFQNVLLRFNLISCGPLLNAQENAY) are Extracellular-facing. A helical membrane pass occupies residues 292-312 (FVCNFIITCEMLLLSVLATWL). The Cytoplasmic segment spans residues 313–348 (LAPRHNAMFDAYRPSMALSETTASLNETEQSMILDH).

It belongs to the OST-alpha family.

The protein resides in the cell membrane. Its function is as follows. Probable transporter. This chain is Organic solute transporter alpha-like protein 3 (osta-3), found in Caenorhabditis elegans.